A 363-amino-acid polypeptide reads, in one-letter code: NAD-dependent epimerase/dehydratase tndE (363 aa).

A helical membrane pass occupies residues 10–30 (GLVLITGVNGFLASHLALQLI). Tyrosine 176 provides a ligand contact to NADP(+).

Belongs to the NAD(P)-dependent epimerase/dehydratase family. Dihydroflavonol-4-reductase subfamily.

The protein resides in the membrane. The protein operates within secondary metabolite biosynthesis; terpenoid biosynthesis. NAD-dependent epimerase/dehydratase; part of the gene cluster that mediates the biosynthesis of talaronoid C, a fusicoccane diterpenoid with an unprecedented tricyclic 5/8/6 ring system. The first step in the pathway is performed by the fusicoccadiene synthase tndC that possesses both prenyl transferase and terpene cyclase activity, converting isopentenyl diphosphate and dimethylallyl diphosphate into geranylgeranyl diphosphate (GGDP) and further converting GGDP into talarodiene, a precursor for talaronoid C. The remaining enzymes from the cluster include the cytochrome P450 monooxygenase tndB, the aldehyde reductase tndE and the alcohol dehydrogenase tndF that are involved in the conversion of talarodiene into talaronoid C. The chain is NAD-dependent epimerase/dehydratase tndE from Aspergillus flavipes.